Reading from the N-terminus, the 427-residue chain is Protein TolB homolog (427 aa).

The N-terminal stretch at 1–20 is a signal peptide; sequence MLRRIFVSTFLVFGIVSLYA.

The protein belongs to the TolB family.

The protein resides in the periplasm. The chain is Protein TolB homolog from Chlamydia caviae (strain ATCC VR-813 / DSM 19441 / 03DC25 / GPIC) (Chlamydophila caviae).